Reading from the N-terminus, the 87-residue chain is DNA-directed RNA polymerase subunit omega (87 aa).

This sequence belongs to the RNA polymerase subunit omega family. The RNAP catalytic core consists of 2 alpha, 1 beta, 1 beta' and 1 omega subunit. When a sigma factor is associated with the core the holoenzyme is formed, which can initiate transcription.

The enzyme catalyses RNA(n) + a ribonucleoside 5'-triphosphate = RNA(n+1) + diphosphate. Its function is as follows. Promotes RNA polymerase assembly. Latches the N- and C-terminal regions of the beta' subunit thereby facilitating its interaction with the beta and alpha subunits. The protein is DNA-directed RNA polymerase subunit omega of Thioalkalivibrio sulfidiphilus (strain HL-EbGR7).